A 460-amino-acid polypeptide reads, in one-letter code: Argininosuccinate lyase (460 aa).

This sequence belongs to the lyase 1 family. Argininosuccinate lyase subfamily.

It localises to the cytoplasm. It catalyses the reaction 2-(N(omega)-L-arginino)succinate = fumarate + L-arginine. The protein operates within amino-acid biosynthesis; L-arginine biosynthesis; L-arginine from L-ornithine and carbamoyl phosphate: step 3/3. The protein is Argininosuccinate lyase of Nitratidesulfovibrio vulgaris (strain ATCC 29579 / DSM 644 / CCUG 34227 / NCIMB 8303 / VKM B-1760 / Hildenborough) (Desulfovibrio vulgaris).